The chain runs to 250 residues: Probable 2' cyclic ADP-D-ribose synthase TcpB (250 aa).

A disordered region spans residues 1-46 (MSKEKQAQSKAHKAQQAISSAKSLSTQKSKMSELERATRDGAAIGK). The segment covering 14-23 (AQQAISSAKS) has biased composition (low complexity). Residues 30 to 39 (KMSELERATR) show a composition bias toward basic and acidic residues. Residues 117-250 (EEYDFFISHA…EIAKELHSLI (134 aa)) form the TIR domain. Glutamate 192 is a catalytic residue.

In terms of assembly, homodimer. Interacts with host TIRAP. Interacts with host TLR4, abolishes the interaction of host TIRAP with TLR4.

The protein localises to the secreted. It is found in the host cell membrane. The enzyme catalyses NAD(+) + H2O = ADP-D-ribose + nicotinamide + H(+). It carries out the reaction NAD(+) = 2'cADPR + nicotinamide + H(+). Functionally, virulence factor that interferes with host Toll-like receptor 2 (TLR2) signaling, resulting in the reduction of dendritic cell maturation, inhibition of pro-inflammatory cytokine secretion and impaired NF-kappa-B activation in macrophages. Also acts on host TLR4. Binds host lipids. Has NAD(+) hydrolase (NADase) activity, catalyzes cleavage of NAD(+) into ADP-D-ribose (ADPR) and nicotinamide, also generates a cyclization variant of cyclic ADPR (cADPR), termed v-cADPR (probably 2'cADPR). In Brucella abortus (strain 2308), this protein is Probable 2' cyclic ADP-D-ribose synthase TcpB.